A 593-amino-acid chain; its full sequence is ETS-related transcription factor Elf-2 (593 aa).

Positions 1–34 (MASAVVDSGGSALELPSDGGENQEGGDTGPDCPA) are disordered. Position 107 is a phosphoserine (Ser107). A disordered region spans residues 146–199 (VEVSTEESEPMDASPIPTSPDSHEPMKKKKVGRKPKTQQSPVSNGSPELGIKKK). The span at 171–181 (MKKKKVGRKPK) shows a compositional bias: basic residues. Position 182 is a phosphothreonine (Thr182). Positions 182 to 191 (TQQSPVSNGS) are enriched in polar residues. Phosphoserine is present on residues Ser185 and Ser191. The segment at residues 208-290 (TYLWEFLLDL…EGQRLVYQFK (83 aa)) is a DNA-binding region (ETS). Positions 362–383 (TSPTHDGSSRSPTTTAPVSAAA) are disordered. A phosphoserine mark is found at Ser363 and Ser372. A compositionally biased stretch (low complexity) spans 370–383 (SRSPTTTAPVSAAA). Thr376 bears the Phosphothreonine mark. Ser432 carries the phosphoserine modification. Arg496 carries the post-translational modification Omega-N-methylarginine. The residue at position 523 (Thr523) is a Phosphothreonine. Lys538 participates in a covalent cross-link: Glycyl lysine isopeptide (Lys-Gly) (interchain with G-Cter in SUMO2).

Belongs to the ETS family. In terms of assembly, interacts with LIM domains of LMO2. Interacts via its N-terminal region with RUNX1. As to expression, expressed in all tissues examined. Highest levels in thymocytes and bone marrow.

It is found in the nucleus. In terms of biological role, probably transcriptionally activates the LYN and BLK promoters and acts synergistically with RUNX1 to transactivate the BLK promoter. This chain is ETS-related transcription factor Elf-2, found in Mus musculus (Mouse).